The chain runs to 202 residues: MIKLTPRQAEILGFIKRCLEDNGFPPTRAEIAQELGFKSPNAAEEHLKALARKGAIEMTPGASRGIRIPGFEARPDESSLPVIGRVAAGAPILAQQHIEESCNINPSFFHPSANYLLRVHGMSMKDVGILDGDLLAVHTTREARNGQIVVARIGDEVTVKRFKREGSKVWLLAENPDFAPIEVDLKDQELVIEGLSVGVIRR.

Positions arginine 28–lysine 48 form a DNA-binding region, H-T-H motif. Active-site for autocatalytic cleavage activity residues include serine 123 and lysine 160.

It belongs to the peptidase S24 family. Homodimer.

The catalysed reaction is Hydrolysis of Ala-|-Gly bond in repressor LexA.. Represses a number of genes involved in the response to DNA damage (SOS response), including recA and lexA. In the presence of single-stranded DNA, RecA interacts with LexA causing an autocatalytic cleavage which disrupts the DNA-binding part of LexA, leading to derepression of the SOS regulon and eventually DNA repair. The chain is LexA repressor 1 from Pseudomonas syringae pv. tomato (strain ATCC BAA-871 / DC3000).